The chain runs to 220 residues: Mediator of RNA polymerase II transcription subunit 19 (220 aa).

Residues 171–220 (AFDLDGTGKSQSGSNSGNNSKKRKNKSSGSSMATPTHSDSHEDMKRRRLE) are disordered. A compositionally biased stretch (low complexity) spans 178–189 (GKSQSGSNSGNN). Over residues 208-220 (SDSHEDMKRRRLE) the composition is skewed to basic and acidic residues.

It belongs to the Mediator complex subunit 19 family. Component of the Mediator complex, which is composed of at least 21 subunits that form three structurally distinct submodules. The Mediator head module contains MED6, MED8, MED11, SRB4/MED17, SRB5/MED18, ROX3/MED19, SRB2/MED20 and SRB6/MED22, the middle module contains MED1, MED4, NUT1/MED5, MED7, CSE2/MED9, NUT2/MED10, SRB7/MED21 and SOH1/MED31, and the tail module contains MED2, PGD1/MED3, RGR1/MED14, GAL11/MED15 and SIN4/MED16. The head and the middle modules interact directly with RNA polymerase II, whereas the elongated tail module interacts with gene-specific regulatory proteins.

The protein resides in the nucleus. Functionally, component of the Mediator complex, a coactivator involved in the regulated transcription of nearly all RNA polymerase II-dependent genes. Mediator functions as a bridge to convey information from gene-specific regulatory proteins to the basal RNA polymerase II transcription machinery. The Mediator complex, having a compact conformation in its free form, is recruited to promoters by direct interactions with regulatory proteins and serves for the assembly of a functional preinitiation complex with RNA polymerase II and the general transcription factors. The Mediator complex unfolds to an extended conformation and partially surrounds RNA polymerase II, specifically interacting with the unphosphorylated form of the C-terminal domain (CTD) of RNA polymerase II. The Mediator complex dissociates from the RNA polymerase II holoenzyme and stays at the promoter when transcriptional elongation begins. In Saccharomyces cerevisiae (strain ATCC 204508 / S288c) (Baker's yeast), this protein is Mediator of RNA polymerase II transcription subunit 19 (ROX3).